The chain runs to 119 residues: MAWALLLLSLLTQGTGSWAQSALTQPRSVSGSPGQSVTISCTGTSSDVGGYNYVSWYQQHPGKAPKLMIYDVSKRPSGVPDRFSGSKSGNTASLTISGLQAEDEADYYCCSYAGSYTFH.

The first 19 residues, 1–19, serve as a signal peptide directing secretion; that stretch reads MAWALLLLSLLTQGTGSWA. At Gln20 the chain carries Pyrrolidone carboxylic acid. The segment at 20-44 is framework-1; it reads QSALTQPRSVSGSPGQSVTISCTGT. The Ig-like domain occupies 20-119; the sequence is QSALTQPRSV…CSYAGSYTFH (100 aa). Cys41 and Cys109 are disulfide-bonded. The interval 45–53 is complementarity-determining-1; the sequence is SSDVGGYNY. Residues 54–70 are framework-2; that stretch reads VSWYQQHPGKAPKLMIY. The tract at residues 71 to 73 is complementarity-determining-2; sequence DVS. Residues 74–109 form a framework-3 region; that stretch reads KRPSGVPDRFSGSKSGNTASLTISGLQAEDEADYYC. Residues 110–119 form a complementarity-determining-3 region; the sequence is CSYAGSYTFH.

In terms of assembly, immunoglobulins are composed of two identical heavy chains and two identical light chains; disulfide-linked.

The protein localises to the secreted. It is found in the cell membrane. Its function is as follows. V region of the variable domain of immunoglobulin light chains that participates in the antigen recognition. Immunoglobulins, also known as antibodies, are membrane-bound or secreted glycoproteins produced by B lymphocytes. In the recognition phase of humoral immunity, the membrane-bound immunoglobulins serve as receptors which, upon binding of a specific antigen, trigger the clonal expansion and differentiation of B lymphocytes into immunoglobulins-secreting plasma cells. Secreted immunoglobulins mediate the effector phase of humoral immunity, which results in the elimination of bound antigens. The antigen binding site is formed by the variable domain of one heavy chain, together with that of its associated light chain. Thus, each immunoglobulin has two antigen binding sites with remarkable affinity for a particular antigen. The variable domains are assembled by a process called V-(D)-J rearrangement and can then be subjected to somatic hypermutations which, after exposure to antigen and selection, allow affinity maturation for a particular antigen. The chain is Immunoglobulin lambda variable 2-11 from Homo sapiens (Human).